The following is a 519-amino-acid chain: Cobyric acid synthase (519 aa).

The region spanning 256–438 (WLRVAVPRLP…WHGLFENDAF (183 aa)) is the GATase cobBQ-type domain. The active-site Nucleophile is C337. Residue H430 is part of the active site.

Belongs to the CobB/CobQ family. CobQ subfamily.

The protein operates within cofactor biosynthesis; adenosylcobalamin biosynthesis. In terms of biological role, catalyzes amidations at positions B, D, E, and G on adenosylcobyrinic A,C-diamide. NH(2) groups are provided by glutamine, and one molecule of ATP is hydrogenolyzed for each amidation. The protein is Cobyric acid synthase of Saccharopolyspora erythraea (strain ATCC 11635 / DSM 40517 / JCM 4748 / NBRC 13426 / NCIMB 8594 / NRRL 2338).